A 194-amino-acid chain; its full sequence is Early growth response protein 1 (194 aa).

C2H2-type zinc fingers lie at residues 1 to 18, 24 to 46, and 52 to 74; these read CDRRFSRSDELTRHIRIH, FQCRICMRNFSRSDHLTTHIRTH, and FACDICGRKFARSDERKRHTKIH. Residues 66 to 88 form a disordered region; sequence ERKRHTKIHLRQKDKKVEKAASV. The segment covering 69–79 has biased composition (basic residues); that stretch reads RHTKIHLRQKD.

This sequence belongs to the EGR C2H2-type zinc-finger protein family.

Its subcellular location is the nucleus. It localises to the cytoplasm. Functionally, transcriptional regulator. Recognizes and binds to the DNA sequence 5'-GCG(T/G)GGGCG-3'(EGR-site) in the promoter region of target genes. Binds double-stranded target DNA, irrespective of the cytosine methylation status. Regulates the transcription of numerous target genes, and thereby plays an important role in regulating the response to growth factors, DNA damage, and ischemia. Plays a role in the regulation of cell survival, proliferation and cell death. Mediates responses to ischemia and hypoxia; regulates the expression of proteins that are involved in inflammatory processes. Plays a role in regulating the expression of circadian clock genes. The protein is Early growth response protein 1 (EGR1) of Coturnix japonica (Japanese quail).